We begin with the raw amino-acid sequence, 141 residues long: Endoribonuclease YbeY (141 aa).

Zn(2+) is bound by residues His101, His105, and His111.

This sequence belongs to the endoribonuclease YbeY family. Zn(2+) is required as a cofactor.

The protein resides in the cytoplasm. Single strand-specific metallo-endoribonuclease involved in late-stage 70S ribosome quality control and in maturation of the 3' terminus of the 16S rRNA. This chain is Endoribonuclease YbeY, found in Nitrosomonas eutropha (strain DSM 101675 / C91 / Nm57).